The following is a 269-amino-acid chain: UPF0524 protein C3orf70 homolog A (269 aa).

Disordered regions lie at residues 139-203 (VQRP…DSGI) and 215-249 (DEDS…QDEC). Residues 141 to 150 (RPPPPTPNPT) are compositionally biased toward pro residues. Positions 151–164 (HQPQTAAPQPVPQR) are enriched in low complexity. Residues 179–191 (QAKEKISAPKMDH) are compositionally biased toward basic and acidic residues. Residues 215–233 (DEDSCVDDDDEEEEDDELS) are compositionally biased toward acidic residues.

Belongs to the UPF0524 family.

Functionally, plays a role in neuronal and neurobehavioral development. Required for normal expression of neuronal markers elavl3 and eno2 and neurobehaviors related to circadian rhythm and changes in light-dark conditions. This is UPF0524 protein C3orf70 homolog A from Danio rerio (Zebrafish).